The chain runs to 437 residues: GTPase Era, mitochondrial (437 aa).

The N-terminal 20 residues, 1–20 (MAAPRRYFPGIVRALLGAWQ), are a transit peptide targeting the mitochondrion. The 219-residue stretch at 112–330 (RVLRVVLLGA…QYLLTQAQPG (219 aa)) folds into the Era-type G domain. The tract at residues 120–127 (GAPNAGKS) is G1. A GTP-binding site is contributed by 120 to 127 (GAPNAGKS). The interval 146-150 (HTTRC) is G2. The tract at residues 167-170 (DTPG) is G3. A GTP-binding site is contributed by 167 to 171 (DTPGI). At Ser173 the chain carries Phosphoserine. Residue 236–239 (NKVD) participates in GTP binding. Residues 236–239 (NKVD) form a G4 region. The tract at residues 272–293 (SRPSTHCPGPETEDPNTHAVRS) is disordered. Positions 308–310 (LSA) are G5. The KH type-2 domain occupies 360–437 (LPEEVPYSVQ…LLRLSVKLLK (78 aa)).

Belongs to the TRAFAC class TrmE-Era-EngA-EngB-Septin-like GTPase superfamily. Era GTPase family.

It localises to the mitochondrion matrix. The protein resides in the mitochondrion inner membrane. Functionally, probable GTPase that plays a role in the mitochondrial ribosomal small subunit assembly. Specifically binds the 12S mitochondrial rRNA (12S mt-rRNA) to a 33 nucleotide section delineating the 3' terminal stem-loop region. May act as a chaperone that protects the 12S mt-rRNA on the 28S mitoribosomal subunit during ribosomal small subunit assembly. The chain is GTPase Era, mitochondrial (Eral1) from Rattus norvegicus (Rat).